The primary structure comprises 859 residues: Cleavage factor two protein 2 (859 aa).

The segment at 560 to 611 (PDDSDNVNQNSRKRPLKDGAKTTSPVNEEDNKNEEEDGYNMSDPISKRSKHR) is disordered. Over residues 586-597 (NEEDNKNEEEDG) the composition is skewed to acidic residues.

As to quaternary structure, component of the cleavage and polyadenylation factor (CPF) complex, which is composed of at least PTI1, SYC1, SSU72, GLC7, MPE1, REF2, PFS2, PTA1, YSH1/BRR5, SWD2, CFT2/YDH1, YTH1, CFT1/YHH1, FIP1 and PAP1. Interacts with the CTD domain of RPB1/RNA polymerase II; the interaction is enhanced upon phosphorylation of the RPB1 CTD domain. Interacts with PCF11.

The protein resides in the nucleus. Functionally, RNA-binding component of the cleavage and polyadenylation factor (CPF) complex, which plays a key role in polyadenylation-dependent pre-mRNA 3'-end formation and cooperates with cleavage factors including the CFIA complex and NAB4/CFIB. May be involved in poly(A)-site recognition. May be involved in the association of the CPF, CPFIA and RNA polymerase II complexes. The sequence is that of Cleavage factor two protein 2 (CFT2) from Saccharomyces cerevisiae (strain ATCC 204508 / S288c) (Baker's yeast).